A 500-amino-acid polypeptide reads, in one-letter code: Probable cytosol aminopeptidase 1 (500 aa).

Mn(2+) is bound by residues Lys-263 and Asp-268. Residue Lys-275 is part of the active site. Residues Asp-287, Asp-346, and Glu-348 each coordinate Mn(2+). Arg-350 is a catalytic residue.

Belongs to the peptidase M17 family. Mn(2+) serves as cofactor.

The protein resides in the cytoplasm. The catalysed reaction is Release of an N-terminal amino acid, Xaa-|-Yaa-, in which Xaa is preferably Leu, but may be other amino acids including Pro although not Arg or Lys, and Yaa may be Pro. Amino acid amides and methyl esters are also readily hydrolyzed, but rates on arylamides are exceedingly low.. The enzyme catalyses Release of an N-terminal amino acid, preferentially leucine, but not glutamic or aspartic acids.. Its function is as follows. Presumably involved in the processing and regular turnover of intracellular proteins. Catalyzes the removal of unsubstituted N-terminal amino acids from various peptides. This chain is Probable cytosol aminopeptidase 1 (pepA1), found in Shewanella oneidensis (strain ATCC 700550 / JCM 31522 / CIP 106686 / LMG 19005 / NCIMB 14063 / MR-1).